Consider the following 286-residue polypeptide: 4-hydroxy-tetrahydrodipicolinate synthase 2 (286 aa).

T45 provides a ligand contact to pyruvate. Y133 acts as the Proton donor/acceptor in catalysis. K161 (schiff-base intermediate with substrate) is an active-site residue. I203 is a binding site for pyruvate.

It belongs to the DapA family. Homotetramer; dimer of dimers.

It is found in the cytoplasm. The catalysed reaction is L-aspartate 4-semialdehyde + pyruvate = (2S,4S)-4-hydroxy-2,3,4,5-tetrahydrodipicolinate + H2O + H(+). It participates in amino-acid biosynthesis; L-lysine biosynthesis via DAP pathway; (S)-tetrahydrodipicolinate from L-aspartate: step 3/4. Catalyzes the condensation of (S)-aspartate-beta-semialdehyde [(S)-ASA] and pyruvate to 4-hydroxy-tetrahydrodipicolinate (HTPA). The polypeptide is 4-hydroxy-tetrahydrodipicolinate synthase 2 (Clostridium acetobutylicum (strain ATCC 824 / DSM 792 / JCM 1419 / IAM 19013 / LMG 5710 / NBRC 13948 / NRRL B-527 / VKM B-1787 / 2291 / W)).